Reading from the N-terminus, the 232-residue chain is Ras-related protein RabP (232 aa).

Residue 15 to 22 (GNYGVGKS) participates in GTP binding. An Effector region motif is present at residues 35–40 (DNTTGF). GTP-binding positions include 58-62 (DTSGQ) and 118-121 (NKFD). S-geranylgeranyl cysteine attachment occurs at residues cysteine 229 and cysteine 230.

Belongs to the small GTPase superfamily. Rab family.

The protein resides in the cell membrane. This chain is Ras-related protein RabP (rabP), found in Dictyostelium discoideum (Social amoeba).